Reading from the N-terminus, the 1413-residue chain is DNA-directed RNA polymerase subunit beta' (1413 aa).

Zn(2+) contacts are provided by Cys-70, Cys-72, Cys-85, and Cys-88. 3 residues coordinate Mg(2+): Asp-460, Asp-462, and Asp-464. Cys-819, Cys-893, Cys-900, and Cys-903 together coordinate Zn(2+). Residues 1392-1413 (EEAFDFGTPSAPAEEPQHPAAE) are disordered.

The protein belongs to the RNA polymerase beta' chain family. As to quaternary structure, the RNAP catalytic core consists of 2 alpha, 1 beta, 1 beta' and 1 omega subunit. When a sigma factor is associated with the core the holoenzyme is formed, which can initiate transcription. Mg(2+) serves as cofactor. It depends on Zn(2+) as a cofactor.

The enzyme catalyses RNA(n) + a ribonucleoside 5'-triphosphate = RNA(n+1) + diphosphate. Functionally, DNA-dependent RNA polymerase catalyzes the transcription of DNA into RNA using the four ribonucleoside triphosphates as substrates. The chain is DNA-directed RNA polymerase subunit beta' from Burkholderia cenocepacia (strain ATCC BAA-245 / DSM 16553 / LMG 16656 / NCTC 13227 / J2315 / CF5610) (Burkholderia cepacia (strain J2315)).